Consider the following 187-residue polypeptide: UPF0232 protein Mb0004 (187 aa).

2 stretches are compositionally biased toward basic and acidic residues: residues 1 to 17 and 35 to 45; these read MTGS…ERLM and AARARGQDAGR. Disordered stretches follow at residues 1–23, 35–75, and 168–187; these read MTGS…PGLD, AARA…DPQP, and PSWR…DTYG.

It belongs to the UPF0232 family.

This chain is UPF0232 protein Mb0004, found in Mycobacterium bovis (strain ATCC BAA-935 / AF2122/97).